The following is a 266-amino-acid chain: Signal peptidase I (266 aa).

The Cytoplasmic portion of the chain corresponds to 1–20 (MQTDNTKSNTNKTAKQEWGS). A helical transmembrane segment spans residues 21–41 (FAFVICIALLIRILIMEPFNV). Topologically, residues 42-266 (PTGSMKATIL…IFRNLYNTDA (225 aa)) are extracellular. Residues S45 and K108 contribute to the active site.

It belongs to the peptidase S26 family.

The protein resides in the cell membrane. The catalysed reaction is Cleavage of hydrophobic, N-terminal signal or leader sequences from secreted and periplasmic proteins.. This is Signal peptidase I (lepB) from Rickettsia conorii (strain ATCC VR-613 / Malish 7).